Reading from the N-terminus, the 385-residue chain is D-alanine--D-alanine ligase (385 aa).

The 211-residue stretch at 165-375 folds into the ATP-grasp domain; that stretch reads KRVFTSFGLK…YPELVDRLVE (211 aa). 201–256 provides a ligand contact to ATP; that stretch reads AGEHGWPLFVKPARAGSSIGITKVDDLAGLDEAVAEAQRHDPKIIVEALLRGREIE. The Mg(2+) site is built by D329, E342, and N344.

This sequence belongs to the D-alanine--D-alanine ligase family. It depends on Mg(2+) as a cofactor. Requires Mn(2+) as cofactor.

The protein localises to the cytoplasm. It catalyses the reaction 2 D-alanine + ATP = D-alanyl-D-alanine + ADP + phosphate + H(+). It functions in the pathway cell wall biogenesis; peptidoglycan biosynthesis. Its function is as follows. Cell wall formation. The sequence is that of D-alanine--D-alanine ligase from Streptomyces avermitilis (strain ATCC 31267 / DSM 46492 / JCM 5070 / NBRC 14893 / NCIMB 12804 / NRRL 8165 / MA-4680).